Here is a 303-residue protein sequence, read N- to C-terminus: Quinolinate synthase (303 aa).

The iminosuccinate site is built by His25 and Ser42. Cys87 is a [4Fe-4S] cluster binding site. Iminosuccinate-binding positions include 113–115 and Ser130; that span reads YVN. Cys173 serves as a coordination point for [4Fe-4S] cluster. Iminosuccinate contacts are provided by residues 199 to 201 and Thr216; that span reads HPE. Residue Cys261 participates in [4Fe-4S] cluster binding.

Belongs to the quinolinate synthase family. Type 2 subfamily. Requires [4Fe-4S] cluster as cofactor.

It is found in the cytoplasm. The catalysed reaction is iminosuccinate + dihydroxyacetone phosphate = quinolinate + phosphate + 2 H2O + H(+). It participates in cofactor biosynthesis; NAD(+) biosynthesis; quinolinate from iminoaspartate: step 1/1. Catalyzes the condensation of iminoaspartate with dihydroxyacetone phosphate to form quinolinate. The polypeptide is Quinolinate synthase (Desulforudis audaxviator (strain MP104C)).